A 390-amino-acid polypeptide reads, in one-letter code: Stearoyl-[acyl-carrier-protein] 9-desaturase 5, chloroplastic (390 aa).

A disordered region spans residues 1–22; that stretch reads MAFAASHTASPSSCGGVAQRRS. Residues 1–31 constitute a chloroplast transit peptide; sequence MAFAASHTASPSSCGGVAQRRSNGMSPVVAM. The Fe cation site is built by Glu-132, Glu-170, His-173, Glu-223, Glu-256, and His-259.

The protein belongs to the fatty acid desaturase type 2 family. As to quaternary structure, homodimer. The cofactor is Fe(2+).

The protein resides in the plastid. Its subcellular location is the chloroplast. The enzyme catalyses octadecanoyl-[ACP] + 2 reduced [2Fe-2S]-[ferredoxin] + O2 + 2 H(+) = (9Z)-octadecenoyl-[ACP] + 2 oxidized [2Fe-2S]-[ferredoxin] + 2 H2O. It functions in the pathway lipid metabolism; fatty acid metabolism. Functionally, converts stearoyl-ACP to oleoyl-ACP by introduction of a cis double bond between carbons 9 and 10 of the acyl chain. The protein is Stearoyl-[acyl-carrier-protein] 9-desaturase 5, chloroplastic of Oryza sativa subsp. japonica (Rice).